We begin with the raw amino-acid sequence, 174 residues long: Ribosome maturation factor RimM (174 aa).

One can recognise a PRC barrel domain in the interval 96–169 (KDTFFICDLI…KMVVDLPQGL (74 aa)).

This sequence belongs to the RimM family. As to quaternary structure, binds ribosomal protein uS19.

Its subcellular location is the cytoplasm. An accessory protein needed during the final step in the assembly of 30S ribosomal subunit, possibly for assembly of the head region. Essential for efficient processing of 16S rRNA. May be needed both before and after RbfA during the maturation of 16S rRNA. It has affinity for free ribosomal 30S subunits but not for 70S ribosomes. This is Ribosome maturation factor RimM from Acetivibrio thermocellus (strain ATCC 27405 / DSM 1237 / JCM 9322 / NBRC 103400 / NCIMB 10682 / NRRL B-4536 / VPI 7372) (Clostridium thermocellum).